The chain runs to 275 residues: Glutamate racemase (275 aa).

Substrate is bound by residues 12–13 and 44–45; these read DS and YG. Catalysis depends on C75, which acts as the Proton donor/acceptor. 76–77 is a substrate binding site; it reads NT. C185 serves as the catalytic Proton donor/acceptor. Substrate is bound at residue 186–187; that stretch reads TH.

It belongs to the aspartate/glutamate racemases family.

It carries out the reaction L-glutamate = D-glutamate. It functions in the pathway cell wall biogenesis; peptidoglycan biosynthesis. Functionally, provides the (R)-glutamate required for cell wall biosynthesis. The sequence is that of Glutamate racemase from Mycolicibacterium paratuberculosis (strain ATCC BAA-968 / K-10) (Mycobacterium paratuberculosis).